Consider the following 778-residue polypeptide: Jhy protein homolog (778 aa).

Disordered regions lie at residues 62 to 271 (DRIR…PKTD), 334 to 408 (QYES…LDTS), 631 to 654 (EKGK…QKRD), and 721 to 746 (IPKP…AGKE). Positions 118–139 (PIEDKYSDLRYDPNWKSKKEEG) are enriched in basic and acidic residues. A compositionally biased stretch (low complexity) spans 223 to 234 (SSLSPYVKSSSS). Polar residues predominate over residues 334–344 (QYESTKSSNVP). Residues 358 to 371 (SRRPAKLKIRKQCK) show a composition bias toward basic residues. Positions 375–389 (GLKSSTTEEVTASQG) are enriched in polar residues. Over residues 390 to 402 (NQNNPPRQQQNQN) the composition is skewed to low complexity. The span at 633–650 (GKKHKKRSSSKNTKLKGY) shows a compositional bias: basic residues. Over residues 733–746 (ASKEQKNPTYAGKE) the composition is skewed to basic and acidic residues.

In terms of biological role, required for the normal development of cilia in brain ependymal cells lining the ventricular surfaces. In Homo sapiens (Human), this protein is Jhy protein homolog.